The chain runs to 551 residues: Rqc2 homolog RqcH (551 aa).

The protein belongs to the NEMF family. Associates with stalled 50S ribosomal subunits, binds to RqcP. Interacts with human fibronectin.

The protein localises to the secreted. Its subcellular location is the capsule. It is found in the cell surface. The protein resides in the cytoplasm. Key component of the ribosome quality control system (RQC), a ribosome-associated complex that mediates the extraction of incompletely synthesized nascent chains from stalled ribosomes and their subsequent degradation. RqcH recruits Ala-charged tRNA, and with RqcP directs the elongation of stalled nascent chains on 50S ribosomal subunits, leading to non-templated C-terminal alanine extensions (Ala tail). The Ala tail promotes nascent chain degradation. May add between 1 and at least 8 Ala residues. Binds to stalled 50S ribosomal subunits. Its function is as follows. Plays a significant role in virulence. Recombinant protein binds to immobilized human fibronectin; binding is saturable and competed by heparin. Purified protein inhibits binding of whole cells to fibronectin. This chain is Rqc2 homolog RqcH, found in Streptococcus pneumoniae serotype 2 (strain D39 / NCTC 7466).